Here is a 269-residue protein sequence, read N- to C-terminus: 1,6-dihydroxycyclohexa-2,4-diene-1-carboxylate dehydrogenase (269 aa).

Valine 11–leucine 35 serves as a coordination point for NAD(+). Serine 142 is a binding site for substrate. Catalysis depends on tyrosine 153, which acts as the Proton acceptor.

The protein belongs to the short-chain dehydrogenases/reductases (SDR) family. As to quaternary structure, homodimer.

The enzyme catalyses (1R,6S)-1,6-dihydroxycyclohexa-2,4-diene-1-carboxylate + NAD(+) = catechol + CO2 + NADH. It functions in the pathway aromatic compound metabolism; benzoate degradation via hydroxylation; catechol from benzoate: step 2/2. Degradation of 2-hydro-1,2-dihydroxy benzoate (DHB) to catechol. This chain is 1,6-dihydroxycyclohexa-2,4-diene-1-carboxylate dehydrogenase (xylL), found in Pseudomonas putida (Arthrobacter siderocapsulatus).